Consider the following 408-residue polypeptide: Putative glutamate--cysteine ligase 2 (408 aa).

Belongs to the glutamate--cysteine ligase type 2 family. YbdK subfamily.

The catalysed reaction is L-cysteine + L-glutamate + ATP = gamma-L-glutamyl-L-cysteine + ADP + phosphate + H(+). Its function is as follows. ATP-dependent carboxylate-amine ligase which exhibits weak glutamate--cysteine ligase activity. In Bradyrhizobium sp. (strain ORS 278), this protein is Putative glutamate--cysteine ligase 2.